The primary structure comprises 82 residues: MHPPSITQLLIILLIIVLLFGAKKIPELAKGLGSGIKNFKKAVKEDEEDNQSEENTKSQIKQSESKNENVSKTHTDSQKQDT.

The helical transmembrane segment at 1 to 21 (MHPPSITQLLIILLIIVLLFG) threads the bilayer. Residues 42-82 (AVKEDEEDNQSEENTKSQIKQSESKNENVSKTHTDSQKQDT) are disordered. Over residues 63–82 (SESKNENVSKTHTDSQKQDT) the composition is skewed to basic and acidic residues.

The protein belongs to the TatA/E family. As to quaternary structure, the Tat system comprises two distinct complexes: a TatABC complex, containing multiple copies of TatA, TatB and TatC subunits, and a separate TatA complex, containing only TatA subunits. Substrates initially bind to the TatABC complex, which probably triggers association of the separate TatA complex to form the active translocon.

It localises to the cell inner membrane. In terms of biological role, part of the twin-arginine translocation (Tat) system that transports large folded proteins containing a characteristic twin-arginine motif in their signal peptide across membranes. TatA could form the protein-conducting channel of the Tat system. This Helicobacter hepaticus (strain ATCC 51449 / 3B1) protein is Sec-independent protein translocase protein TatA.